An 875-amino-acid polypeptide reads, in one-letter code: Pyrogallol hydroxytransferase large subunit (875 aa).

The disordered stretch occupies residues 82–104; it reads RKSFDPNGERNPQLRGAGLSKQD. Ser-175 provides a ligand contact to Mo-bis(molybdopterin guanine dinucleotide).

This sequence belongs to the prokaryotic molybdopterin-containing oxidoreductase family. In terms of assembly, heterodimer of a large and a small subunit. It depends on Mo-bis(molybdopterin guanine dinucleotide) as a cofactor.

The enzyme catalyses 1,2,3,5-tetrahydroxybenzene + 1,2,3-trihydroxybenzene = 1,2,3,5-tetrahydroxybenzene + 1,3,5-trihydroxybenzene. In terms of biological role, isomerization of pyrogallol to phloroglucin. The polypeptide is Pyrogallol hydroxytransferase large subunit (athL) (Pelobacter acidigallici).